A 236-amino-acid polypeptide reads, in one-letter code: Leucyl/phenylalanyl-tRNA--protein transferase (236 aa).

Belongs to the L/F-transferase family.

The protein resides in the cytoplasm. The enzyme catalyses N-terminal L-lysyl-[protein] + L-leucyl-tRNA(Leu) = N-terminal L-leucyl-L-lysyl-[protein] + tRNA(Leu) + H(+). It carries out the reaction N-terminal L-arginyl-[protein] + L-leucyl-tRNA(Leu) = N-terminal L-leucyl-L-arginyl-[protein] + tRNA(Leu) + H(+). The catalysed reaction is L-phenylalanyl-tRNA(Phe) + an N-terminal L-alpha-aminoacyl-[protein] = an N-terminal L-phenylalanyl-L-alpha-aminoacyl-[protein] + tRNA(Phe). Functionally, functions in the N-end rule pathway of protein degradation where it conjugates Leu, Phe and, less efficiently, Met from aminoacyl-tRNAs to the N-termini of proteins containing an N-terminal arginine or lysine. This Yersinia enterocolitica serotype O:8 / biotype 1B (strain NCTC 13174 / 8081) protein is Leucyl/phenylalanyl-tRNA--protein transferase.